Here is a 777-residue protein sequence, read N- to C-terminus: Myotubularin-related protein 10 (777 aa).

Residues 196 to 217 (PSGDGGGGGGGGNGAGGGSSQK) are disordered. Gly residues predominate over residues 197–214 (SGDGGGGGGGGNGAGGGS). The region spanning 221–661 (FETYSDWDRE…THIKLWKLCY (441 aa)) is the Myotubularin phosphatase domain. Phosphoserine is present on residues S607 and S751.

This sequence belongs to the protein-tyrosine phosphatase family. Non-receptor class myotubularin subfamily.

This Homo sapiens (Human) protein is Myotubularin-related protein 10 (MTMR10).